We begin with the raw amino-acid sequence, 255 residues long: Aliphatic sulfonates import ATP-binding protein SsuB (255 aa).

An ABC transporter domain is found at 12–233 (LLLNAVSKHY…RLGSVRLAEL (222 aa)). 44–51 (GRSGGGKS) contacts ATP.

It belongs to the ABC transporter superfamily. Aliphatic sulfonates importer (TC 3.A.1.17.2) family. As to quaternary structure, the complex is composed of two ATP-binding proteins (SsuB), two transmembrane proteins (SsuC) and a solute-binding protein (SsuA).

The protein resides in the cell inner membrane. The enzyme catalyses ATP + H2O + aliphatic sulfonate-[sulfonate-binding protein]Side 1 = ADP + phosphate + aliphatic sulfonateSide 2 + [sulfonate-binding protein]Side 1.. Part of the ABC transporter complex SsuABC involved in aliphatic sulfonates import. Responsible for energy coupling to the transport system. The chain is Aliphatic sulfonates import ATP-binding protein SsuB from Escherichia coli O1:K1 / APEC.